We begin with the raw amino-acid sequence, 259 residues long: Imidazole glycerol phosphate synthase subunit HisF (259 aa).

Active-site residues include aspartate 11 and aspartate 130.

It belongs to the HisA/HisF family. Heterodimer of HisH and HisF.

Its subcellular location is the cytoplasm. It catalyses the reaction 5-[(5-phospho-1-deoxy-D-ribulos-1-ylimino)methylamino]-1-(5-phospho-beta-D-ribosyl)imidazole-4-carboxamide + L-glutamine = D-erythro-1-(imidazol-4-yl)glycerol 3-phosphate + 5-amino-1-(5-phospho-beta-D-ribosyl)imidazole-4-carboxamide + L-glutamate + H(+). Its pathway is amino-acid biosynthesis; L-histidine biosynthesis; L-histidine from 5-phospho-alpha-D-ribose 1-diphosphate: step 5/9. In terms of biological role, IGPS catalyzes the conversion of PRFAR and glutamine to IGP, AICAR and glutamate. The HisF subunit catalyzes the cyclization activity that produces IGP and AICAR from PRFAR using the ammonia provided by the HisH subunit. This chain is Imidazole glycerol phosphate synthase subunit HisF, found in Desulfovibrio desulfuricans (strain ATCC 27774 / DSM 6949 / MB).